We begin with the raw amino-acid sequence, 281 residues long: Putative E3 ubiquitin-protein ligase SINA-like 6 (281 aa).

Positions 1 to 26 (MVGVLLSERNGSQKRHCSSISSDDGR) are disordered. The segment at 45–81 (CPICYQALKIPVFQCGNGHLACSSCCPKLRNKCPACA) adopts an RING-type zinc-finger fold. Residues 95 to 280 (VLESVLVPCR…MMLCINELKQ (186 aa)) are SBD. An SIAH-type zinc finger spans residues 98–156 (SVLVPCRYADLGCTKTIYYGRESTHEKICNFSPCSCPVQGCNYTGSYKDLYEHYDLTHS). Residues cysteine 103, cysteine 110, histidine 122, cysteine 126, cysteine 133, cysteine 138, histidine 150, and histidine 155 each coordinate Zn(2+).

The protein belongs to the SINA (Seven in absentia) family.

The catalysed reaction is S-ubiquitinyl-[E2 ubiquitin-conjugating enzyme]-L-cysteine + [acceptor protein]-L-lysine = [E2 ubiquitin-conjugating enzyme]-L-cysteine + N(6)-ubiquitinyl-[acceptor protein]-L-lysine.. It functions in the pathway protein modification; protein ubiquitination. Its function is as follows. E3 ubiquitin-protein ligase that mediates ubiquitination and subsequent proteasomal degradation of target proteins. E3 ubiquitin ligases accept ubiquitin from an E2 ubiquitin-conjugating enzyme in the form of a thioester and then directly transfers the ubiquitin to targeted substrates. It probably triggers the ubiquitin-mediated degradation of different substrates. The chain is Putative E3 ubiquitin-protein ligase SINA-like 6 from Arabidopsis thaliana (Mouse-ear cress).